Here is a 237-residue protein sequence, read N- to C-terminus: Small ribosomal subunit protein uS5 (237 aa).

Residues 1–59 (MADETNLEGVAAVEATGGEPQREGRGRGRGRGGNDRGGERGGRGRRDDRRGRGNNDEEG) form a disordered region. The segment covering 20 to 55 (PQREGRGRGRGRGGNDRGGERGGRGRRDDRRGRGNN) has biased composition (basic and acidic residues). In terms of domain architecture, S5 DRBM spans 63 to 126 (LIEKLVHINR…AAAKRAMVRV (64 aa)).

This sequence belongs to the universal ribosomal protein uS5 family. Part of the 30S ribosomal subunit. Contacts proteins S4 and S8.

Functionally, with S4 and S12 plays an important role in translational accuracy. Located at the back of the 30S subunit body where it stabilizes the conformation of the head with respect to the body. In Novosphingobium aromaticivorans (strain ATCC 700278 / DSM 12444 / CCUG 56034 / CIP 105152 / NBRC 16084 / F199), this protein is Small ribosomal subunit protein uS5.